The following is a 122-amino-acid chain: Small ribosomal subunit protein bS6 (122 aa).

This sequence belongs to the bacterial ribosomal protein bS6 family.

Its function is as follows. Binds together with bS18 to 16S ribosomal RNA. This is Small ribosomal subunit protein bS6 from Vibrio cholerae serotype O1 (strain ATCC 39541 / Classical Ogawa 395 / O395).